The sequence spans 332 residues: Methionine synthase (332 aa).

Zn(2+)-binding residues include His-211, Cys-213, and Cys-296.

It belongs to the archaeal MetE family. The cofactor is Zn(2+).

Its pathway is amino-acid biosynthesis; L-methionine biosynthesis via de novo pathway. Its function is as follows. Catalyzes the transfer of a methyl group to L-homocysteine resulting in methionine formation. The physiological methyl donor is unknown. This Saccharolobus islandicus (strain Y.G.57.14 / Yellowstone #1) (Sulfolobus islandicus) protein is Methionine synthase.